The chain runs to 150 residues: MSGEDIVEIYTDGACSGNPGPGGWGVLMIYKDREKELCGGEQATTNNRMELMAAIQALEALKRDAHVRIHTDSNYVKDGITKWIHGWKKNGWKNAAKQPVKNAELWRRLEAAISTHQVSWHWVKGHSDHPENDRADALARQGMAPYLPSK.

The 142-residue stretch at 3-144 folds into the RNase H type-1 domain; it reads GEDIVEIYTD…ADALARQGMA (142 aa). Mg(2+) contacts are provided by aspartate 12, glutamate 50, aspartate 72, and aspartate 136.

It belongs to the RNase H family. Monomer. Requires Mg(2+) as cofactor.

The protein resides in the cytoplasm. The enzyme catalyses Endonucleolytic cleavage to 5'-phosphomonoester.. Endonuclease that specifically degrades the RNA of RNA-DNA hybrids. This Parvibaculum lavamentivorans (strain DS-1 / DSM 13023 / NCIMB 13966) protein is Ribonuclease H.